A 142-amino-acid chain; its full sequence is Large ribosomal subunit protein uL11 (142 aa).

This sequence belongs to the universal ribosomal protein uL11 family. In terms of assembly, part of the ribosomal stalk of the 50S ribosomal subunit. Interacts with L10 and the large rRNA to form the base of the stalk. L10 forms an elongated spine to which L12 dimers bind in a sequential fashion forming a multimeric L10(L12)X complex. Post-translationally, one or more lysine residues are methylated.

Forms part of the ribosomal stalk which helps the ribosome interact with GTP-bound translation factors. The sequence is that of Large ribosomal subunit protein uL11 from Mesoplasma florum (strain ATCC 33453 / NBRC 100688 / NCTC 11704 / L1) (Acholeplasma florum).